Reading from the N-terminus, the 488-residue chain is Replication-associated protein (488 aa).

The disordered stretch occupies residues 462–488 (PRPRQMQRSATEHNLFQYARSGRDPTS).

Its subcellular location is the host nucleus. Plays an essential for the replication of viral DNA. Presumably cleaves viral genomic dsRNA replicative form to initiate rolling circle replication. The protein is Replication-associated protein of Chaetoceros diatodnavirus 1 (Chaetoceros setoense DNA virus).